We begin with the raw amino-acid sequence, 494 residues long: Chromosomal replication initiator protein DnaA (494 aa).

The interval 1–103 (MTNIGGPVVE…LRVEVIVRGM (103 aa)) is domain I, interacts with DnaA modulators. The interval 103–148 (MKRVSKGVVCRTSAAPVVLEGQTASSFVESYTEPSVKDIEAGVFGS) is domain II. Positions 149-371 (PLDSRYTFES…GAFNQLLFRQ (223 aa)) are domain III, AAA+ region. 4 residues coordinate ATP: glycine 195, glycine 197, lysine 198, and threonine 199. Residues 372 to 494 (SFESDLSLER…LKRLIGEQAA (123 aa)) are domain IV, binds dsDNA.

The protein belongs to the DnaA family. As to quaternary structure, oligomerizes as a right-handed, spiral filament on DNA at oriC.

Its subcellular location is the cytoplasm. In terms of biological role, plays an essential role in the initiation and regulation of chromosomal replication. ATP-DnaA binds to the origin of replication (oriC) to initiate formation of the DNA replication initiation complex once per cell cycle. Binds the DnaA box (a 9 base pair repeat at the origin) and separates the double-stranded (ds)DNA. Forms a right-handed helical filament on oriC DNA; dsDNA binds to the exterior of the filament while single-stranded (ss)DNA is stabiized in the filament's interior. The ATP-DnaA-oriC complex binds and stabilizes one strand of the AT-rich DNA unwinding element (DUE), permitting loading of DNA polymerase. After initiation quickly degrades to an ADP-DnaA complex that is not apt for DNA replication. Binds acidic phospholipids. This is Chromosomal replication initiator protein DnaA from Bartonella quintana (strain Toulouse) (Rochalimaea quintana).